Here is a 97-residue protein sequence, read N- to C-terminus: Class II hydrophobin NC2 (97 aa).

The N-terminal stretch at 1 to 17 is a signal peptide; it reads MQFTIATVLSLLTITLA. Intrachain disulfides connect Cys-31-Cys-79, Cys-40-Cys-70, Cys-41-Cys-53, and Cys-80-Cys-91. An N-linked (GlcNAc...) asparagine glycan is attached at Asn-62.

Belongs to the cerato-ulmin hydrophobin family. In terms of assembly, homotrimer. Further self-assembles to form highly ordered films at water-air interfaces through intermolecular interactions.

It localises to the secreted. The protein resides in the cell wall. In terms of biological role, aerial growth, conidiation, and dispersal of filamentous fungi in the environment rely upon a capability of their secreting small amphipathic proteins called hydrophobins (HPBs) with low sequence identity. Class I can self-assemble into an outermost layer of rodlet bundles on aerial cell surfaces, conferring cellular hydrophobicity that supports fungal growth, development and dispersal; whereas Class II form highly ordered films at water-air interfaces through intermolecular interactions but contribute nothing to the rodlet structure. NC2 is a class II hydrophobin that has the potential to adsorb to the hydrophobic interface at the hydrophobic-hydrophilic interface at very high rate but the predicted self-assembly NC2 film possesses a lower flexural rigidity than other class II hydrophobins such as HFBII from Hypocrea jecorina (also known as Trichoderma reesei). In Neurospora crassa (strain ATCC 24698 / 74-OR23-1A / CBS 708.71 / DSM 1257 / FGSC 987), this protein is Class II hydrophobin NC2.